The chain runs to 254 residues: Homeobox protein BarH-like 1 (254 aa).

The tract at residues 1 to 20 is disordered; the sequence is MQRPGEPGAARFGPPEGCAD. A DNA-binding region (homeobox) is located at residues 142 to 201; it reads GRRSRTVFTELQLMGLEKRFEKQKYLSTPDRIDLAESLGLSQLQVKTWYQNRRMKWKKIV. The disordered stretch occupies residues 204-254; that stretch reads GGGLESPTKPKGRPKKNSIPTSEQLTEQERAKDAEKPAEVPGEPSDRSRED. Residues 230 to 254 are compositionally biased toward basic and acidic residues; the sequence is EQERAKDAEKPAEVPGEPSDRSRED.

This sequence belongs to the BAR homeobox family. Widely expressed. Expressed at higher levels in testis and heart. Detected in craniofacial tissue and adult iris, but not in lymphocytes, fibroblasts, choroid retina, retinal pigment epithelium, kidney, or fetal liver.

The protein resides in the nucleus. Its function is as follows. Transcription factor, which is involved in craniofacial development, in odontogenesis and in stomach organogenesis. May have a role in the differentiation of molars from incisors. Plays a role in suppressing endodermal Wnt activity. Binds to a regulatory module of the NCAM promoter. The protein is Homeobox protein BarH-like 1 (BARX1) of Homo sapiens (Human).